A 561-amino-acid chain; its full sequence is Arginine--tRNA ligase (561 aa).

The short motif at 123–133 is the 'HIGH' region element; the sequence is PNIAKDMHVGH.

This sequence belongs to the class-I aminoacyl-tRNA synthetase family. As to quaternary structure, monomer.

It localises to the cytoplasm. The enzyme catalyses tRNA(Arg) + L-arginine + ATP = L-arginyl-tRNA(Arg) + AMP + diphosphate. The protein is Arginine--tRNA ligase (argS) of Chlamydia pneumoniae (Chlamydophila pneumoniae).